Here is a 29-residue protein sequence, read N- to C-terminus: Potassium channel toxin alpha-KTx 3.15 (29 aa).

A disulfide bond links cysteine 8 and cysteine 27.

Belongs to the short scorpion toxin superfamily. Potassium channel inhibitor family. Alpha-KTx 03 subfamily. Expressed by the venom gland.

Its subcellular location is the secreted. May play a role in blocking voltage-gated potassium channels Kv1.1/KCNA1, Kv1.3/KCNA3 and Kv1.6/KCNA6. The sequence is that of Potassium channel toxin alpha-KTx 3.15 from Mesobuthus gibbosus (Mediterranean checkered scorpion).